Consider the following 352-residue polypeptide: MAAAPDRAKALEAALAQIDKQFGKGSVMRLGDEVRAPIEVIPTGSIALDVALGIGGLPRGRVIEIYGPESSGKTTVALHAVANAQRAGGIAAFIDAEHALDPDYAAKLGVDTDALLVSQPDTGEQALEIMDMLVGSGSLDIVVIDSVAALVPRAEIEGDMGDSHVGLQARLMSQALRKITGRLSQTKTTAIFINQLREKIGVFFGSPETTTGGKALKFYASVRIDVRRIQTLKEGADSVGNRTKAKIVKNKMAPPFKIAEFDIIYGQGISREGGIIDMGVEHGIIKKSGSWFTYDGDQLGQGMENSRRFLRDNPELAAELERLIKEKLGVGVKPADAESKEDSPKLKAVDGF.

67–74 (GPESSGKT) is a binding site for ATP. Positions 332–352 (VKPADAESKEDSPKLKAVDGF) are disordered. Over residues 335–352 (ADAESKEDSPKLKAVDGF) the composition is skewed to basic and acidic residues.

Belongs to the RecA family.

It is found in the cytoplasm. Can catalyze the hydrolysis of ATP in the presence of single-stranded DNA, the ATP-dependent uptake of single-stranded DNA by duplex DNA, and the ATP-dependent hybridization of homologous single-stranded DNAs. It interacts with LexA causing its activation and leading to its autocatalytic cleavage. The protein is Protein RecA of Pseudarthrobacter chlorophenolicus (strain ATCC 700700 / DSM 12829 / CIP 107037 / JCM 12360 / KCTC 9906 / NCIMB 13794 / A6) (Arthrobacter chlorophenolicus).